We begin with the raw amino-acid sequence, 346 residues long: Small ribosomal subunit biogenesis GTPase RsgA 1 (346 aa).

The CP-type G domain occupies 93–248; sequence EEQLIAANFD…IIDTPGMREF (156 aa). GTP is bound by residues 138–141 and 190–198; these read TKAD and GSSGVGKSS. 4 residues coordinate Zn(2+): Cys-271, Cys-276, His-278, and Cys-284.

The protein belongs to the TRAFAC class YlqF/YawG GTPase family. RsgA subfamily. Monomer. Associates with 30S ribosomal subunit, binds 16S rRNA. Requires Zn(2+) as cofactor.

It localises to the cytoplasm. Its function is as follows. One of several proteins that assist in the late maturation steps of the functional core of the 30S ribosomal subunit. Helps release RbfA from mature subunits. May play a role in the assembly of ribosomal proteins into the subunit. Circularly permuted GTPase that catalyzes slow GTP hydrolysis, GTPase activity is stimulated by the 30S ribosomal subunit. The polypeptide is Small ribosomal subunit biogenesis GTPase RsgA 1 (Listeria innocua serovar 6a (strain ATCC BAA-680 / CLIP 11262)).